Here is a 62-residue protein sequence, read N- to C-terminus: Photosystem II reaction center protein K (62 aa).

The propeptide occupies 1-25; sequence MPNILSLTCICFNSVLYPTTSFFFA. A helical transmembrane segment spans residues 33–53; sequence IFNPIVDVMPVIPLFFFLLAF.

This sequence belongs to the PsbK family. As to quaternary structure, PSII is composed of 1 copy each of membrane proteins PsbA, PsbB, PsbC, PsbD, PsbE, PsbF, PsbH, PsbI, PsbJ, PsbK, PsbL, PsbM, PsbT, PsbX, PsbY, PsbZ, Psb30/Ycf12, at least 3 peripheral proteins of the oxygen-evolving complex and a large number of cofactors. It forms dimeric complexes.

Its subcellular location is the plastid. It is found in the chloroplast thylakoid membrane. In terms of biological role, one of the components of the core complex of photosystem II (PSII). PSII is a light-driven water:plastoquinone oxidoreductase that uses light energy to abstract electrons from H(2)O, generating O(2) and a proton gradient subsequently used for ATP formation. It consists of a core antenna complex that captures photons, and an electron transfer chain that converts photonic excitation into a charge separation. The polypeptide is Photosystem II reaction center protein K (Agrostis stolonifera (Creeping bentgrass)).